A 453-amino-acid chain; its full sequence is Glutamyl-tRNA reductase (453 aa).

Substrate contacts are provided by residues 52–55, S105, 110–112, and Q116; these read TCNR and EDQ. Catalysis depends on C53, which acts as the Nucleophile. 184-189 contacts NADP(+); that stretch reads GAGEMA. Residues 413–424 are compositionally biased toward low complexity; the sequence is PGLEPEPTELPT. Residues 413–453 are disordered; sequence PGLEPEPTELPTVPDGPEGVPEELRERMSSGMLEQFSTNDD.

The protein belongs to the glutamyl-tRNA reductase family. In terms of assembly, homodimer.

It catalyses the reaction (S)-4-amino-5-oxopentanoate + tRNA(Glu) + NADP(+) = L-glutamyl-tRNA(Glu) + NADPH + H(+). It participates in porphyrin-containing compound metabolism; protoporphyrin-IX biosynthesis; 5-aminolevulinate from L-glutamyl-tRNA(Glu): step 1/2. Catalyzes the NADPH-dependent reduction of glutamyl-tRNA(Glu) to glutamate 1-semialdehyde (GSA). The chain is Glutamyl-tRNA reductase from Natronomonas pharaonis (strain ATCC 35678 / DSM 2160 / CIP 103997 / JCM 8858 / NBRC 14720 / NCIMB 2260 / Gabara) (Halobacterium pharaonis).